A 188-amino-acid chain; its full sequence is Ion-translocating oxidoreductase complex subunit B (188 aa).

The hydrophobic stretch occupies residues 1–26 (MNGVLLAIGVLLPICLASGALLGYAA). The 4Fe-4S domain maps to 32-90 (QGDPVAERVNALLPQTQCGQCGYPGCKPYAEAIAAGDRINKCPPGGEATIQALADLLDL). The [4Fe-4S] cluster site is built by C49, C52, C57, C73, C113, C116, C119, C123, C143, C146, C149, and C153. 4Fe-4S ferredoxin-type domains lie at 104-133 (RVAY…GAAR) and 134-163 (LMHT…MREI).

This sequence belongs to the 4Fe4S bacterial-type ferredoxin family. RnfB subfamily. The complex is composed of six subunits: RnfA, RnfB, RnfC, RnfD, RnfE and RnfG. It depends on [4Fe-4S] cluster as a cofactor.

It localises to the cell inner membrane. Functionally, part of a membrane-bound complex that couples electron transfer with translocation of ions across the membrane. This is Ion-translocating oxidoreductase complex subunit B from Pseudomonas paraeruginosa (strain DSM 24068 / PA7) (Pseudomonas aeruginosa (strain PA7)).